The sequence spans 848 residues: Neuroligin-3 (848 aa).

Positions 1–37 are cleaved as a signal peptide; sequence MWLRLGPPSLSLSPKPTVGRSLCLTLWFLSLALRAST. The Extracellular portion of the chain corresponds to 38–709; sequence QAPAPTVNTH…NPRDYSTELS (672 aa). N98 carries an N-linked (GlcNAc...) asparagine glycan. Cysteines 106 and 141 form a disulfide. A disordered region spans residues 170–195; the sequence is RKGGSGAKKQGEDLADNDGDEDEDIR. Residues 182–194 are compositionally biased toward acidic residues; sequence DLADNDGDEDEDI. 2 disulfides stabilise this stretch: C340/C351 and C510/C544. N545 carries N-linked (GlcNAc...) asparagine glycosylation. 2 stretches are compositionally biased toward polar residues: residues 645–656 and 677–689; these read TKVPPPDTTHSS and AYSNENAQGSWNG. The disordered stretch occupies residues 645–694; sequence TKVPPPDTTHSSHITRRPNGKTWSTKRPAISPAYSNENAQGSWNGDQDAG. Residues 710 to 730 traverse the membrane as a helical segment; the sequence is VTIAVGASLLFLNVLAFAALY. Topologically, residues 731–848 are cytoplasmic; that stretch reads YRKDKRRQEP…LPHSHSTTRV (118 aa). S745 is subject to Phosphoserine. Phosphotyrosine is present on Y792.

Belongs to the type-B carboxylesterase/lipase family. In terms of assembly, homodimer, and heterodimer with NLGN1 and NLGN2. Interacts with neurexins NRXN1, NRXN2 and NRXN3. Interaction with neurexins is mediated by heparan sulfate glycan modification on neurexin. Interacts (via its C-terminus) with DLG4/PSD-95 (via PDZ domain 3). Expressed in the blood vessel walls (at protein level). Detected in throughout the brain and in spinal cord. Detected in brain, and at lower levels in pancreas islet beta cells.

It is found in the cell membrane. The protein resides in the synapse. Cell surface protein involved in cell-cell-interactions via its interactions with neurexin family members. Plays a role in synapse function and synaptic signal transmission, and may mediate its effects by clustering other synaptic proteins. May promote the initial formation of synapses, but is not essential for this. May also play a role in glia-glia or glia-neuron interactions in the developing peripheral nervous system. In Homo sapiens (Human), this protein is Neuroligin-3 (NLGN3).